A 133-amino-acid chain; its full sequence is Protein NrdI (133 aa).

Belongs to the NrdI family.

In terms of biological role, probably involved in ribonucleotide reductase function. In Escherichia coli O17:K52:H18 (strain UMN026 / ExPEC), this protein is Protein NrdI.